The chain runs to 381 residues: Prostatic acid phosphatase (381 aa).

Positions 1–31 (MRAVPLHLVGTASLTLGFLLLLSLRLDPGQA) are cleaved as a signal peptide. R42 is a substrate binding site. Residue H43 is the Nucleophile of the active site. R46 contacts substrate. The N-linked (GlcNAc...) asparagine glycan is linked to N93. R110 is a binding site for substrate. 3 disulfides stabilise this stretch: C160–C371, C214–C312, and C346–C350. A glycan (N-linked (GlcNAc...) asparagine) is linked at N219. H288 contributes to the substrate binding site. The active-site Proton donor is the D289. An N-linked (GlcNAc...) asparagine glycan is attached at N332.

It belongs to the histidine acid phosphatase family. In terms of assembly, homodimer; dimer formation is required for phosphatase activity. Post-translationally, N-glycosylated. Expressed in prostate epithelium. Also expressed in the pelvic nerve and sacral spinal cord. Localizes in peptidergic and non-peptidergic nociceptive (pain-sensing) neurons.

The protein localises to the secreted. The protein resides in the cell membrane. It localises to the lysosome membrane. The catalysed reaction is a phosphate monoester + H2O = an alcohol + phosphate. It carries out the reaction a ribonucleoside 5'-phosphate + H2O = a ribonucleoside + phosphate. The enzyme catalyses 1-(9Z-octadecenoyl)-sn-glycero-3-phosphate + H2O = 1-(9Z-octadecenoyl)-sn-glycerol + phosphate. It catalyses the reaction O-phospho-L-tyrosyl-[protein] + H2O = L-tyrosyl-[protein] + phosphate. Inhibited by L(+)-tartrate. A non-specific tyrosine phosphatase that dephosphorylates a diverse number of substrates under acidic conditions (pH 4-6) including alkyl, aryl, and acyl orthophosphate monoesters and phosphorylated proteins. Has lipid phosphatase activity and inactivates lysophosphatidic acid in seminal plasma. In terms of biological role, in addition to its tyrosine phosphatase activity, also has ecto-5'-nucleotidase activity in dorsal root ganglion (DRG) neurons. Generates adenosine from AMP. This extracellular adenosine leads to a decrease in chronic pain by activating A1R in nociceptive neurons. This chain is Prostatic acid phosphatase (Acp3), found in Rattus norvegicus (Rat).